The chain runs to 323 residues: Putative HTH-type transcriptional regulatory protein Mbur_1811 (323 aa).

In terms of domain architecture, HTH cro/C1-type spans 132–190; the sequence is LKEARMNVSMSLGALASELGVSRRTISKYEEGQMDASIDIVLHLEEILDMALAKSIDIL. Positions 143-162 form a DNA-binding region, H-T-H motif; sequence LGALASELGVSRRTISKYEE.

The chain is Putative HTH-type transcriptional regulatory protein Mbur_1811 from Methanococcoides burtonii (strain DSM 6242 / NBRC 107633 / OCM 468 / ACE-M).